The chain runs to 184 residues: ATP synthase subunit delta (184 aa).

This sequence belongs to the ATPase delta chain family. In terms of assembly, F-type ATPases have 2 components, F(1) - the catalytic core - and F(0) - the membrane proton channel. F(1) has five subunits: alpha(3), beta(3), gamma(1), delta(1), epsilon(1). F(0) has three main subunits: a(1), b(2) and c(10-14). The alpha and beta chains form an alternating ring which encloses part of the gamma chain. F(1) is attached to F(0) by a central stalk formed by the gamma and epsilon chains, while a peripheral stalk is formed by the delta and b chains.

Its subcellular location is the cell membrane. Functionally, f(1)F(0) ATP synthase produces ATP from ADP in the presence of a proton or sodium gradient. F-type ATPases consist of two structural domains, F(1) containing the extramembraneous catalytic core and F(0) containing the membrane proton channel, linked together by a central stalk and a peripheral stalk. During catalysis, ATP synthesis in the catalytic domain of F(1) is coupled via a rotary mechanism of the central stalk subunits to proton translocation. In terms of biological role, this protein is part of the stalk that links CF(0) to CF(1). It either transmits conformational changes from CF(0) to CF(1) or is implicated in proton conduction. The polypeptide is ATP synthase subunit delta (Bacillus licheniformis (strain ATCC 14580 / DSM 13 / JCM 2505 / CCUG 7422 / NBRC 12200 / NCIMB 9375 / NCTC 10341 / NRRL NRS-1264 / Gibson 46)).